A 327-amino-acid polypeptide reads, in one-letter code: Tetraacyldisaccharide 4'-kinase (327 aa).

An ATP-binding site is contributed by 58 to 65 (TVGGTGKT).

Belongs to the LpxK family.

It carries out the reaction a lipid A disaccharide + ATP = a lipid IVA + ADP + H(+). It functions in the pathway glycolipid biosynthesis; lipid IV(A) biosynthesis; lipid IV(A) from (3R)-3-hydroxytetradecanoyl-[acyl-carrier-protein] and UDP-N-acetyl-alpha-D-glucosamine: step 6/6. Functionally, transfers the gamma-phosphate of ATP to the 4'-position of a tetraacyldisaccharide 1-phosphate intermediate (termed DS-1-P) to form tetraacyldisaccharide 1,4'-bis-phosphate (lipid IVA). This chain is Tetraacyldisaccharide 4'-kinase, found in Alcanivorax borkumensis (strain ATCC 700651 / DSM 11573 / NCIMB 13689 / SK2).